The primary structure comprises 429 residues: Alanine aminotransferase (429 aa).

Residues Gly-65 and Asn-204 each coordinate L-alanine. Position 265 is an N6-(pyridoxal phosphate)lysine (Lys-265). Arg-403 is a binding site for L-alanine.

This sequence belongs to the class-I pyridoxal-phosphate-dependent aminotransferase family. Homodimer. The cofactor is pyridoxal 5'-phosphate.

The protein resides in the cytoplasm. It catalyses the reaction L-alanine + 2-oxoglutarate = pyruvate + L-glutamate. This is Alanine aminotransferase (aspC) from Mycobacterium bovis (strain ATCC BAA-935 / AF2122/97).